The sequence spans 909 residues: Lon protease homolog 2, peroxisomal (909 aa).

In terms of domain architecture, Lon N-terminal spans 1-230; it reads MAPVRAPTAR…KVIELLDRQV (230 aa). A disordered region spans residues 249–269; that stretch reads FPMDPDSTKPGKVKPPVKAPG. 463-470 contacts ATP; sequence GPPGVGKT. In terms of domain architecture, Lon proteolytic spans 706 to 893; it reads TSRPGIVTGL…WEAIRYVWPD (188 aa). Active-site residues include S799 and K842. The short motif at 907 to 909 is the Microbody targeting signal element; the sequence is SRL.

The protein belongs to the peptidase S16 family.

It localises to the peroxisome matrix. The protein localises to the cytoplasm. It carries out the reaction Hydrolysis of proteins in presence of ATP.. In terms of biological role, ATP-dependent serine protease that mediates the selective degradation of misfolded and unassembled polypeptides in the peroxisomal matrix. Necessary for type 2 peroxisome targeting signal (PTS2)-containing protein processing and facilitates peroxisome matrix protein import. This is Lon protease homolog 2, peroxisomal from Sordaria macrospora (strain ATCC MYA-333 / DSM 997 / K(L3346) / K-hell).